A 529-amino-acid polypeptide reads, in one-letter code: Delayed-rectifier potassium channel regulatory subunit KCNS1 (529 aa).

At methionine 1 to leucine 217 the chain is on the cytoplasmic side. Residues proline 218–isoleucine 239 form a helical membrane-spanning segment. Topologically, residues histidine 240–proline 270 are extracellular. Residues valine 271–leucine 293 form a helical membrane-spanning segment. Topologically, residues alanine 294–proline 304 are cytoplasmic. A helical transmembrane segment spans residues leucine 305–alanine 322. Topologically, residues glycine 323–leucine 340 are extracellular. The chain crosses the membrane as a helical; Voltage-sensor span at residues glycine 341–histidine 361. At serine 362–tyrosine 376 the chain is on the cytoplasmic side. The helical transmembrane segment at arginine 377–tyrosine 398 threads the bilayer. The Extracellular segment spans residues threonine 399–isoleucine 411. An intramembrane region (helical) is located at residues proline 412–threonine 423. Residues threonine 424 to aspartate 429 carry the Selectivity filter motif. The stretch at threonine 424–valine 431 is an intramembrane region. At proline 432–lysine 438 the chain is on the extracellular side. The helical transmembrane segment at leucine 439–tyrosine 467 threads the bilayer. Topologically, residues arginine 468–tyrosine 529 are cytoplasmic. Residues glycine 494–tyrosine 529 form a disordered region. Residues threonine 502–aspartate 514 show a composition bias toward basic and acidic residues.

It belongs to the potassium channel family. S (TC 1.A.1.2) subfamily. Kv9.1/KCNS1 sub-subfamily. Heterotetramer with KCNB1. Heterotetramer with KCNB2. Does not form homomultimers.

The protein resides in the cell membrane. Functionally, potassium channel regulatory subunit that modulate the delayed rectifier voltage-gated potassium channel activity of KCNB1 and KCNB2 by altering their kinetics, expression levels, and shifting the half-inactivation potential to more polarized values. While it does not form functional channels on its own, it can form functional heterotetrameric channels with KCNB1 and KCNB2. Each regulatory subunit has unique regulatory properties that can lead to extensive inhibition, significant changes in kinetics, and/or substantial shifts in the voltage dependencies of the inactivation process. This is Delayed-rectifier potassium channel regulatory subunit KCNS1 from Chlorocebus aethiops (Green monkey).